A 1390-amino-acid polypeptide reads, in one-letter code: DNA-directed RNA polymerase III subunit RPC1 (1390 aa).

Zn(2+)-binding residues include Cys-69, Cys-72, Cys-79, His-82, Cys-109, and Cys-112. Lys-144 is a DNA binding site. 2 residues coordinate Zn(2+): Cys-156 and Cys-159. Residues Lys-167, Ser-326, Lys-348, Arg-353, Arg-360, and Arg-366 each contribute to the DNA site. Lys-445 carries the N6-acetyllysine modification. Arg-464 lines the RNA pocket. Mg(2+)-binding residues include Asp-499, Asp-501, and Asp-503. RNA is bound at residue Asp-503. The interval 843–884 is bridging helix; it reads TPTEFFFHTMAGREGLVDTAVKTAETGYMQRRLVKSLEDLCS. The trigger loop stretch occupies residues 1029-1070; it reads PGSAVGALCAQSIGEPGTQMTLKTFHFAGVASMNITLGVPRI. 3 residues coordinate DNA: Arg-1159, Arg-1305, and Lys-1323.

The protein belongs to the RNA polymerase beta' chain family. In terms of assembly, component of the RNA polymerase III (Pol III) (Pol III) complex consisting of 17 subunits: a ten-subunit catalytic core composed of POLR3A/RPC1, POLR3B/RPC2, POLR1C/RPAC1, POLR1D/RPAC2, POLR3K/RPC10, POLR2E/RPABC1, POLR2F/RPABC2, POLR2H/RPABC3, POLR2K/RPABC4 and POLR2L/RPABC5; a mobile stalk composed of two subunits POLR3H/RPC8 and CRCP/RPC9, protruding from the core and functioning primarily in transcription initiation; and additional subunits homologous to general transcription factors of the RNA polymerase II machinery, POLR3C/RPC3-POLR3F/RPC6-POLR3G/RPC7 heterotrimer required for transcription initiation and POLR3D/RPC4-POLR3E/RPC5 heterodimer involved in both transcription initiation and termination. Pol III exists as two alternative complexes defined by the mutually exclusive incorporation of subunit POLR3G/RPC7alpha or POLR3GL/RPC7beta. The presence of POLR3G/RPC7alpha or POLR3GL/RPC7beta differentially modulates the transcription potential of Pol III, with POLR3G/RPC7alpha specifically associated with transcription of snaR-A non-coding RNAs. As part of the RNA polymerase III complex, interacts with PKP2. Mg(2+) is required as a cofactor. As to expression, expressed in the brain, in the cortex and the white matter (at protein level).

It is found in the nucleus. The protein localises to the cytoplasm. It localises to the cytosol. The enzyme catalyses RNA(n) + a ribonucleoside 5'-triphosphate = RNA(n+1) + diphosphate. Functionally, catalytic core component of RNA polymerase III (Pol III), a DNA-dependent RNA polymerase which synthesizes small non-coding RNAs using the four ribonucleoside triphosphates as substrates. Synthesizes 5S rRNA, snRNAs, tRNAs and miRNAs from at least 500 distinct genomic loci. Pol III-mediated transcription cycle proceeds through transcription initiation, transcription elongation and transcription termination stages. During transcription initiation, Pol III is recruited to DNA promoters type I, II or III with the help of general transcription factors and other specific initiation factors. Once the polymerase has escaped from the promoter it enters the elongation phase during which RNA is actively polymerized, based on complementarity with the template DNA strand. Transcription termination involves the release of the RNA transcript and polymerase from the DNA. Forms Pol III active center together with the second largest subunit POLR3B/RPC2. Appends one nucleotide at a time to the 3' end of the nascent RNA, with POLR3A/RPC1 contributing a Mg(2+)-coordinating DxDGD motif, and POLR3B/RPC2 participating in the coordination of a second Mg(2+) ion and providing lysine residues believed to facilitate Watson-Crick base pairing between the incoming nucleotide and template base. Typically, Mg(2+) ions direct a 5' nucleoside triphosphate to form a phosphodiester bond with the 3' hydroxyl of the preceding nucleotide of the nascent RNA, with the elimination of pyrophosphate. Pol III plays a key role in sensing and limiting infection by intracellular bacteria and DNA viruses. Acts as a nuclear and cytosolic DNA sensor involved in innate immune response. Can sense non-self dsDNA that serves as template for transcription into dsRNA. The non-self RNA polymerase III transcripts, such as Epstein-Barr virus-encoded RNAs (EBERs) induce type I interferon and NF-kappa-B through the RIG-I pathway. In Homo sapiens (Human), this protein is DNA-directed RNA polymerase III subunit RPC1.